A 368-amino-acid chain; its full sequence is 3-isopropylmalate dehydrogenase (368 aa).

Position 80-93 (80-93 (GPKWDNLEFSKKPE)) interacts with NAD(+). Positions 100, 110, 138, and 229 each coordinate substrate. 3 residues coordinate Mg(2+): D229, D253, and D257. Residue 292 to 304 (GSAPDIAGKEIAN) participates in NAD(+) binding.

It belongs to the isocitrate and isopropylmalate dehydrogenases family. LeuB type 1 subfamily. In terms of assembly, homodimer. It depends on Mg(2+) as a cofactor. Requires Mn(2+) as cofactor.

It localises to the cytoplasm. The enzyme catalyses (2R,3S)-3-isopropylmalate + NAD(+) = 4-methyl-2-oxopentanoate + CO2 + NADH. It functions in the pathway amino-acid biosynthesis; L-leucine biosynthesis; L-leucine from 3-methyl-2-oxobutanoate: step 3/4. Functionally, catalyzes the oxidation of 3-carboxy-2-hydroxy-4-methylpentanoate (3-isopropylmalate) to 3-carboxy-4-methyl-2-oxopentanoate. The product decarboxylates to 4-methyl-2 oxopentanoate. This chain is 3-isopropylmalate dehydrogenase, found in Pelagibacter ubique (strain HTCC1062).